Consider the following 455-residue polypeptide: Bifunctional protein GlmU (455 aa).

Residues 1–226 (MSLEIVILAA…PMEVQGANDR (226 aa)) form a pyrophosphorylase region. Residues 8–11 (LAAG), K22, Q73, 78–79 (GT), 99–101 (YGD), G136, E151, N166, and N224 contribute to the UDP-N-acetyl-alpha-D-glucosamine site. A Mg(2+)-binding site is contributed by D101. N224 is a Mg(2+) binding site. The interval 227–247 (KQLSELERHYQLRAGRRLMAQ) is linker. An N-acetyltransferase region spans residues 248-455 (GVTLRDPARF…WKRPEKIKKN (208 aa)). UDP-N-acetyl-alpha-D-glucosamine contacts are provided by R330 and K348. H360 (proton acceptor) is an active-site residue. Positions 363 and 374 each coordinate UDP-N-acetyl-alpha-D-glucosamine. Acetyl-CoA contacts are provided by residues A377, 383 to 384 (NY), S402, A420, and R437.

It in the N-terminal section; belongs to the N-acetylglucosamine-1-phosphate uridyltransferase family. In the C-terminal section; belongs to the transferase hexapeptide repeat family. Homotrimer. The cofactor is Mg(2+).

It localises to the cytoplasm. It catalyses the reaction alpha-D-glucosamine 1-phosphate + acetyl-CoA = N-acetyl-alpha-D-glucosamine 1-phosphate + CoA + H(+). It carries out the reaction N-acetyl-alpha-D-glucosamine 1-phosphate + UTP + H(+) = UDP-N-acetyl-alpha-D-glucosamine + diphosphate. Its pathway is nucleotide-sugar biosynthesis; UDP-N-acetyl-alpha-D-glucosamine biosynthesis; N-acetyl-alpha-D-glucosamine 1-phosphate from alpha-D-glucosamine 6-phosphate (route II): step 2/2. It functions in the pathway nucleotide-sugar biosynthesis; UDP-N-acetyl-alpha-D-glucosamine biosynthesis; UDP-N-acetyl-alpha-D-glucosamine from N-acetyl-alpha-D-glucosamine 1-phosphate: step 1/1. It participates in bacterial outer membrane biogenesis; LPS lipid A biosynthesis. Its function is as follows. Catalyzes the last two sequential reactions in the de novo biosynthetic pathway for UDP-N-acetylglucosamine (UDP-GlcNAc). The C-terminal domain catalyzes the transfer of acetyl group from acetyl coenzyme A to glucosamine-1-phosphate (GlcN-1-P) to produce N-acetylglucosamine-1-phosphate (GlcNAc-1-P), which is converted into UDP-GlcNAc by the transfer of uridine 5-monophosphate (from uridine 5-triphosphate), a reaction catalyzed by the N-terminal domain. The protein is Bifunctional protein GlmU of Pseudomonas fluorescens (strain Pf0-1).